A 116-amino-acid polypeptide reads, in one-letter code: MKPHMSATVLRAPRVAAILLAVVLAAVLATAVNGAQRCGDQARGAKCPNCLCCGKYGFCGSGDAYCGAGSCQSQCRGCRDDVVGQALPAEPGSTRATAASSASARGLNLTATTGGP.

Positions 1-34 (MKPHMSATVLRAPRVAAILLAVVLAAVLATAVNG) are cleaved as a signal peptide. The 43-residue stretch at 35-77 (AQRCGDQARGAKCPNCLCCGKYGFCGSGDAYCGAGSCQSQCRG) folds into the Chitin-binding type-1 domain. Intrachain disulfides connect Cys-38/Cys-53, Cys-47/Cys-59, Cys-50/Cys-78, Cys-52/Cys-66, and Cys-71/Cys-75. The propeptide occupies 80 to 116 (DDVVGQALPAEPGSTRATAASSASARGLNLTATTGGP). The interval 89–116 (AEPGSTRATAASSASARGLNLTATTGGP) is disordered. Residues 93 to 105 (STRATAASSASAR) show a composition bias toward low complexity.

Functionally, binds chitin. Has antifungal activity against the fungi F.solani (IC(50)=5 ug/ml), F.verticillioides (IC(50)=30 ug/ml), F.oxysporum (IC(50)=5 ug/ml), B.sorokiniana (IC(50)=5 ug/ml), B.cinerea (IC(50)=20 ug/ml) and N.crassa (IC(50)=10 ug/ml). Inhibits hyphal elongation and causes browning of hyphae in F.oxysporum. Causes destruction and discoloration of spores in B.sorokiniana. Inhibits the development of disease caused by the fungus P.infestans on potato tubers. Has antibacterial activity against the Gram-negative bacteria P.syringae and E.carotovora, and the Gram-positive bacterium C.michiganensis. Its function is as follows. Has antifungal activity against F.verticillioides (IC(50)=2.7 ug/ml). At concentrations between 45 uM and 225 uM, inhibits activity of metalloproteinase fungalysin Fv-cpm from F.verticillioides. In Triticum kiharae (Wheat), this protein is Antimicrobial peptide 1b.